The following is a 375-amino-acid chain: Chaperone protein DnaJ (375 aa).

Positions 5-69 (DYYEILGVSK…QKRAAYDQYG (65 aa)) constitute a J domain. The CR-type zinc-finger motif lies at 130–208 (GVTKEIRIPT…CHGHGRVEKA (79 aa)). The Zn(2+) site is built by Cys143, Cys146, Cys160, Cys163, Cys182, Cys185, Cys196, and Cys199. CXXCXGXG motif repeat units follow at residues 143–150 (CGVCHGSG), 160–167 (CPTCHGQG), 182–189 (CPHCHGRG), and 196–203 (CNSCHGHG).

It belongs to the DnaJ family. Homodimer. Zn(2+) is required as a cofactor.

Its subcellular location is the cytoplasm. Its function is as follows. Participates actively in the response to hyperosmotic and heat shock by preventing the aggregation of stress-denatured proteins and by disaggregating proteins, also in an autonomous, DnaK-independent fashion. Unfolded proteins bind initially to DnaJ; upon interaction with the DnaJ-bound protein, DnaK hydrolyzes its bound ATP, resulting in the formation of a stable complex. GrpE releases ADP from DnaK; ATP binding to DnaK triggers the release of the substrate protein, thus completing the reaction cycle. Several rounds of ATP-dependent interactions between DnaJ, DnaK and GrpE are required for fully efficient folding. Also involved, together with DnaK and GrpE, in the DNA replication of plasmids through activation of initiation proteins. This is Chaperone protein DnaJ from Serratia proteamaculans (strain 568).